The sequence spans 421 residues: Enolase (421 aa).

Position 162 (Q162) interacts with (2R)-2-phosphoglycerate. E204 serves as the catalytic Proton donor. Residues D241, E284, and D311 each contribute to the Mg(2+) site. The (2R)-2-phosphoglycerate site is built by K336, R365, S366, and K387. K336 functions as the Proton acceptor in the catalytic mechanism.

The protein belongs to the enolase family. Requires Mg(2+) as cofactor.

It is found in the cytoplasm. The protein resides in the secreted. It localises to the cell surface. The enzyme catalyses (2R)-2-phosphoglycerate = phosphoenolpyruvate + H2O. Its pathway is carbohydrate degradation; glycolysis; pyruvate from D-glyceraldehyde 3-phosphate: step 4/5. Its function is as follows. Catalyzes the reversible conversion of 2-phosphoglycerate (2-PG) into phosphoenolpyruvate (PEP). It is essential for the degradation of carbohydrates via glycolysis. The chain is Enolase from Nitratiruptor sp. (strain SB155-2).